Reading from the N-terminus, the 182-residue chain is Troponin I, fast skeletal muscle (182 aa).

G2 carries the N-acetylglycine modification. The tract at residues 2-48 (GDEEKRNRAITARRQHLKSVMLQIAATELEKEESRREAEKQNYLAEH) is involved in binding TNC. T12 is subject to Phosphothreonine. Residues 97–117 (NQKLFDLRGKFKRPPLRRVRM) are involved in binding TNC and actin. S118 carries the phosphoserine modification.

This sequence belongs to the troponin I family. In terms of assembly, binds to actin and tropomyosin.

Troponin I is the inhibitory subunit of troponin, the thin filament regulatory complex which confers calcium-sensitivity to striated muscle actomyosin ATPase activity. This Homo sapiens (Human) protein is Troponin I, fast skeletal muscle (TNNI2).